The following is a 284-amino-acid chain: Cell division protein ZipA (284 aa).

Methionine 1 is a topological domain (periplasmic). A helical membrane pass occupies residues 2 to 22 (EIGLREWLIVIGIIVIAGILF). The Cytoplasmic portion of the chain corresponds to 23-284 (DGWRRMRGGK…FERRALTQKR (262 aa)). Positions 47 to 140 (PDDEGSAELL…SASHSDKDQP (94 aa)) are disordered. Basic and acidic residues-rich tracts occupy residues 62-75 (LDTH…EHDL), 83-102 (REPR…EPHQ), and 119-140 (SRDD…KDQP).

It belongs to the ZipA family. Interacts with FtsZ via their C-terminal domains.

Its subcellular location is the cell inner membrane. In terms of biological role, essential cell division protein that stabilizes the FtsZ protofilaments by cross-linking them and that serves as a cytoplasmic membrane anchor for the Z ring. Also required for the recruitment to the septal ring of downstream cell division proteins. This chain is Cell division protein ZipA, found in Pseudomonas fluorescens (strain ATCC BAA-477 / NRRL B-23932 / Pf-5).